The chain runs to 142 residues: Endoribonuclease YbeY (142 aa).

Zn(2+) is bound by residues His107, His111, and Asp117.

It belongs to the endoribonuclease YbeY family. It depends on Zn(2+) as a cofactor.

The protein resides in the cytoplasm. Its function is as follows. Single strand-specific metallo-endoribonuclease involved in late-stage 70S ribosome quality control and in maturation of the 3' terminus of the 16S rRNA. The sequence is that of Endoribonuclease YbeY from Parabacteroides distasonis (strain ATCC 8503 / DSM 20701 / CIP 104284 / JCM 5825 / NCTC 11152).